The sequence spans 312 residues: Malate dehydrogenase (312 aa).

Residues 7–13 and aspartate 34 contribute to the NAD(+) site; that span reads GAAGGIG. Substrate contacts are provided by arginine 81 and arginine 87. Residues asparagine 94 and 117-119 each bind NAD(+); that span reads ITN. Substrate is bound by residues asparagine 119 and arginine 153. Histidine 177 (proton acceptor) is an active-site residue. Methionine 227 contributes to the NAD(+) binding site.

It belongs to the LDH/MDH superfamily. MDH type 1 family. Homodimer.

It carries out the reaction (S)-malate + NAD(+) = oxaloacetate + NADH + H(+). Functionally, catalyzes the reversible oxidation of malate to oxaloacetate. This is Malate dehydrogenase from Escherichia coli (strain ATCC 8739 / DSM 1576 / NBRC 3972 / NCIMB 8545 / WDCM 00012 / Crooks).